The following is a 249-amino-acid chain: Diaminopimelate epimerase (249 aa).

The substrate site is built by asparagine 11 and asparagine 60. Cysteine 69 functions as the Proton donor in the catalytic mechanism. Residues 70–71 (GN), asparagine 164, and 182–183 (ER) contribute to the substrate site. The active-site Proton acceptor is the cysteine 192. 193 to 194 (GT) contacts substrate.

This sequence belongs to the diaminopimelate epimerase family. As to quaternary structure, homodimer.

It is found in the cytoplasm. The enzyme catalyses (2S,6S)-2,6-diaminopimelate = meso-2,6-diaminopimelate. Its pathway is amino-acid biosynthesis; L-lysine biosynthesis via DAP pathway; DL-2,6-diaminopimelate from LL-2,6-diaminopimelate: step 1/1. Catalyzes the stereoinversion of LL-2,6-diaminopimelate (L,L-DAP) to meso-diaminopimelate (meso-DAP), a precursor of L-lysine and an essential component of the bacterial peptidoglycan. This Campylobacter jejuni subsp. jejuni serotype O:23/36 (strain 81-176) protein is Diaminopimelate epimerase.